The chain runs to 432 residues: 3-phosphoshikimate 1-carboxyvinyltransferase (432 aa).

Lys23, Ser24, and Arg28 together coordinate 3-phosphoshikimate. Lys23 serves as a coordination point for phosphoenolpyruvate. Gly95 and Arg123 together coordinate phosphoenolpyruvate. Ser167, Gln169, Asp317, and Lys344 together coordinate 3-phosphoshikimate. Gln169 serves as a coordination point for phosphoenolpyruvate. The active-site Proton acceptor is Asp317. Phosphoenolpyruvate-binding residues include Arg348 and Arg390.

The protein belongs to the EPSP synthase family. Monomer.

The protein localises to the cytoplasm. It catalyses the reaction 3-phosphoshikimate + phosphoenolpyruvate = 5-O-(1-carboxyvinyl)-3-phosphoshikimate + phosphate. It functions in the pathway metabolic intermediate biosynthesis; chorismate biosynthesis; chorismate from D-erythrose 4-phosphate and phosphoenolpyruvate: step 6/7. In terms of biological role, catalyzes the transfer of the enolpyruvyl moiety of phosphoenolpyruvate (PEP) to the 5-hydroxyl of shikimate-3-phosphate (S3P) to produce enolpyruvyl shikimate-3-phosphate and inorganic phosphate. The polypeptide is 3-phosphoshikimate 1-carboxyvinyltransferase (Staphylococcus aureus (strain JH9)).